Consider the following 405-residue polypeptide: Splicing factor 45 (405 aa).

Residue Ser-2 is modified to N-acetylserine. A Phosphoserine modification is found at Ser-2. Lys-15 is covalently cross-linked (Glycyl lysine isopeptide (Lys-Gly) (interchain with G-Cter in SUMO2)). Position 21 is an N6-acetyllysine (Lys-21). Glycyl lysine isopeptide (Lys-Gly) (interchain with G-Cter in SUMO2) cross-links involve residues Lys-24 and Lys-33. Position 41 is an N6-acetyllysine; alternate (Lys-41). Lys-41 participates in a covalent cross-link: Glycyl lysine isopeptide (Lys-Gly) (interchain with G-Cter in SUMO2); alternate. Residues Leu-57–Ile-68 show a composition bias toward basic and acidic residues. 2 disordered regions span residues Leu-57–Ser-88 and Arg-114–Asn-233. Lys-58 participates in a covalent cross-link: Glycyl lysine isopeptide (Lys-Gly) (interchain with G-Cter in SUMO2). A Phosphothreonine modification is found at Thr-71. Basic and acidic residues predominate over residues Arg-114–Pro-153. A phosphoserine mark is found at Ser-155 and Ser-169. Positions Val-182–Pro-200 are enriched in basic and acidic residues. Ser-222 carries the post-translational modification Phosphoserine. The 49-residue stretch at Gly-235–Thr-283 folds into the G-patch domain. Thr-237 carries the phosphothreonine modification. Residue Lys-256 forms a Glycyl lysine isopeptide (Lys-Gly) (interchain with G-Cter in SUMO2) linkage. The residue at position 266 (Ser-266) is a Phosphoserine. Lys-276 participates in a covalent cross-link: Glycyl lysine isopeptide (Lys-Gly) (interchain with G-Cter in SUMO2). Ser-295 and Ser-297 each carry phosphoserine. Residues Val-310–Cys-389 form the RRM domain.

As to quaternary structure, binds SXL. Associates with the spliceosome. Interacts with SF3B1, SF1 and U2AF2.

The protein localises to the nucleus. Splice factor that binds to the single-stranded 3'AG at the exon/intron border and promotes its utilization in the second catalytic step. Involved in the regulation of alternative splicing and the utilization of cryptic splice sites. The protein is Splicing factor 45 (Rbm17) of Mus musculus (Mouse).